A 333-amino-acid polypeptide reads, in one-letter code: ATP synthase subunit a (333 aa).

An N-terminal signal peptide occupies residues 1–32; sequence MIYLHNKRKGMLKRLSALIVIGLLMNLPAVFA. Helical transmembrane passes span 100–120, 161–181, 185–205, 229–249, 254–274, 279–299, and 300–320; these read HVVM…GVGN, FMPF…IGLV, ATAT…FLVT, LMWI…PFAL, FANM…IFVF, IAPV…LVAF, and LQAY…VAHE.

The protein belongs to the ATPase A chain family. As to quaternary structure, F-type ATPases have 2 components, CF(1) - the catalytic core - and CF(0) - the membrane proton channel. CF(1) has five subunits: alpha(3), beta(3), gamma(1), delta(1), epsilon(1). CF(0) has four main subunits: a, b, b' and c.

The protein resides in the cell inner membrane. Key component of the proton channel; it plays a direct role in the translocation of protons across the membrane. This chain is ATP synthase subunit a, found in Chloroherpeton thalassium (strain ATCC 35110 / GB-78).